Consider the following 664-residue polypeptide: Macoilin (664 aa).

Helical transmembrane passes span Thr28–Leu48, Ala75–Ile95, Val120–Phe140, and Phe154–Val174. The span at Arg253–Lys265 shows a compositional bias: basic and acidic residues. Residues Arg253 to Asn274 are disordered. A Phosphoserine modification is found at Ser305. Residues Lys320–Ser348 are compositionally biased toward polar residues. A disordered region spans residues Lys320–Leu367. Asn324 carries an N-linked (GlcNAc...) asparagine glycan. A Phosphoserine modification is found at Ser332. Residues Asn340 and Asn452 are each glycosylated (N-linked (GlcNAc...) asparagine). A phosphoserine mark is found at Ser631 and Ser634. The disordered stretch occupies residues Ser631–Lys664. An N-linked (GlcNAc...) asparagine glycan is attached at Asn655.

It belongs to the macoilin family.

It localises to the rough endoplasmic reticulum membrane. It is found in the nucleus membrane. Plays a role in the regulation of neuronal activity. The protein is Macoilin (MACO1) of Bos taurus (Bovine).